The chain runs to 272 residues: 2-succinyl-6-hydroxy-2,4-cyclohexadiene-1-carboxylate synthase (272 aa).

The protein belongs to the AB hydrolase superfamily. MenH family. As to quaternary structure, monomer.

The enzyme catalyses 5-enolpyruvoyl-6-hydroxy-2-succinyl-cyclohex-3-ene-1-carboxylate = (1R,6R)-6-hydroxy-2-succinyl-cyclohexa-2,4-diene-1-carboxylate + pyruvate. The protein operates within quinol/quinone metabolism; 1,4-dihydroxy-2-naphthoate biosynthesis; 1,4-dihydroxy-2-naphthoate from chorismate: step 3/7. It functions in the pathway quinol/quinone metabolism; menaquinone biosynthesis. Its function is as follows. Catalyzes a proton abstraction reaction that results in 2,5-elimination of pyruvate from 2-succinyl-5-enolpyruvyl-6-hydroxy-3-cyclohexene-1-carboxylate (SEPHCHC) and the formation of 2-succinyl-6-hydroxy-2,4-cyclohexadiene-1-carboxylate (SHCHC). The chain is 2-succinyl-6-hydroxy-2,4-cyclohexadiene-1-carboxylate synthase from Yersinia pseudotuberculosis serotype I (strain IP32953).